The sequence spans 193 residues: Peptide deformylase 2 (193 aa).

Fe cation is bound by residues cysteine 100 and histidine 142. Glutamate 143 is an active-site residue. Residue histidine 146 participates in Fe cation binding.

Belongs to the polypeptide deformylase family. Fe(2+) is required as a cofactor.

It catalyses the reaction N-terminal N-formyl-L-methionyl-[peptide] + H2O = N-terminal L-methionyl-[peptide] + formate. Its function is as follows. Removes the formyl group from the N-terminal Met of newly synthesized proteins. Requires at least a dipeptide for an efficient rate of reaction. N-terminal L-methionine is a prerequisite for activity but the enzyme has broad specificity at other positions. The chain is Peptide deformylase 2 from Corynebacterium efficiens (strain DSM 44549 / YS-314 / AJ 12310 / JCM 11189 / NBRC 100395).